Here is a 173-residue protein sequence, read N- to C-terminus: Shikimate kinase 1 (173 aa).

14 to 19 (GAGKST) serves as a coordination point for ATP. Serine 18 is a binding site for Mg(2+). Positions 36, 60, and 82 each coordinate substrate. Arginine 120 contributes to the ATP binding site. Arginine 140 lines the substrate pocket. Glutamine 157 lines the ATP pocket.

The protein belongs to the shikimate kinase family. Monomer. The cofactor is Mg(2+).

The protein localises to the cytoplasm. The enzyme catalyses shikimate + ATP = 3-phosphoshikimate + ADP + H(+). Its pathway is metabolic intermediate biosynthesis; chorismate biosynthesis; chorismate from D-erythrose 4-phosphate and phosphoenolpyruvate: step 5/7. Its function is as follows. Catalyzes the specific phosphorylation of the 3-hydroxyl group of shikimic acid using ATP as a cosubstrate. The sequence is that of Shikimate kinase 1 from Yersinia pseudotuberculosis serotype O:1b (strain IP 31758).